The chain runs to 3066 residues: Serine-protein kinase ATM (3066 aa).

Serine 2 carries the post-translational modification N-acetylserine. A Phosphoserine; by autocatalysis modification is found at serine 367. The interval 829–862 (LDHGVHPGEDDEDGGGCDSLMEAEGPSSTGLSTA) is disordered. The tract at residues 1380–1389 (DPAPNPPYFP) is interaction with ABL1. Phosphoserine; by autocatalysis is present on serine 1899. The region spanning 1946–2576 (EVAKVAQSCS…LFIILALANA (631 aa)) is the FAT domain. Residues 1973–1982 (TDEQEKRSPT) are compositionally biased toward basic and acidic residues. 2 disordered regions span residues 1973-2000 (TDEQ…EKSK) and 2585-2607 (PETT…LDED). The span at 1985 to 1996 (EGSQGTTISSLS) shows a compositional bias: polar residues. Serine 1987 is subject to Phosphoserine; by autocatalysis. Residues 2597–2607 (TSKENSHLDED) show a composition bias toward basic and acidic residues. Residues 2696–3009 (FKTEFRLAGG…ECKQSLSDTD (314 aa)) form the PI3K/PI4K catalytic domain. The tract at residues 2702 to 2708 (LAGGLNL) is G-loop. Positions 2877–2885 (GLGDRHVQN) are catalytic loop. The tract at residues 2897–2921 (HIDLGVAFEQGKILPTPETVPFRLS) is activation loop. The segment at 2986 to 3007 (DESDLHSTPNADDQECKQSLSD) is disordered. Positions 2991–3007 (HSTPNADDQECKQSLSD) are enriched in polar residues. Serine 3006 bears the Phosphoserine mark. N6-acetyllysine is present on lysine 3026. Residues 3034–3066 (TVLSVGGQVNLLIQQAMDPKNLSRLFPGWKAWV) enclose the FATC domain. The Microbody targeting signal; atypical signature appears at 3056-3058 (SRL).

This sequence belongs to the PI3/PI4-kinase family. ATM subfamily. In terms of assembly, homodimer. Dimers or tetramers in inactive state. On DNA damage, autophosphorylation dissociates ATM into monomers rendering them catalytically active. Binds p53/TP53, ABL1, BRCA1 and TERF1. Interacts with NBN (via FxF/Y motif). Part of the BRCA1-associated genome surveillance complex (BASC), which contains BRCA1, MSH2, MSH6, MLH1, ATM, BLM, PMS2 and the RAD50-MRE11-NBN protein complex. This association could be a dynamic process changing throughout the cell cycle and within subnuclear domains. Interacts with RAD17; DNA damage promotes the association. Interacts with EEF1E1; the interaction, induced on DNA damage, up-regulates TP53. Interacts with KAT8, NABP2, ATMIN and CEP164. Interacts with AP2B1 and AP3B2; the interaction occurs in cytoplasmic vesicles. Interacts with TELO2 and TTI1. Interacts with DDX1. Interacts with BRAT1. Interacts with CYREN (via XLF motif). Interacts (via microbody targeting signal) with PEX5; promoting translocation to peroxisomes in response to reactive oxygen species (ROS). Phosphorylated by NUAK1/ARK5. Autophosphorylation on Ser-367, Ser-1899, Ser-1987 correlates with DNA damage-mediated activation of the kinase. Post-translationally, phosphorylated by NUAK1/ARK5. Autophosphorylation on Ser-367, Ser-1899, Ser-1987 correlates with DNA damage-mediated activation of the kinase. During the late stages of DNA damage response, dephosphorylated following deacetylation by SIRT7, leading to ATM deactivation. In terms of processing, acetylation, on DNA damage, is required for activation of the kinase activity, dimer-monomer transition, and subsequent autophosphorylation on Ser-1987. Acetylated in vitro by KAT5/TIP60. Deacetylated by SIRT7 during the late stages of DNA damage response, promoting ATM dephosphorylation and subsequent deactivation. Expressed in brain, skeletal muscle, testis, followed by spleen, lung, kidney, heart, liver and thymus. Ubiquitously expressed in embryonal tissues.

It is found in the nucleus. Its subcellular location is the cytoplasmic vesicle. The protein localises to the cytoplasm. It localises to the cytoskeleton. The protein resides in the microtubule organizing center. It is found in the centrosome. Its subcellular location is the peroxisome matrix. It catalyses the reaction L-seryl-[protein] + ATP = O-phospho-L-seryl-[protein] + ADP + H(+). The enzyme catalyses L-threonyl-[protein] + ATP = O-phospho-L-threonyl-[protein] + ADP + H(+). Activated by the MRN (MRE11-RAD50-NBS1) complex in response to DNA double strand breaks (DSBs), which recruits ATM to DSBs and promotes its activation. Inhibited by wortmannin. Serine/threonine protein kinase which activates checkpoint signaling upon double strand breaks (DSBs), apoptosis and genotoxic stresses such as ionizing ultraviolet A light (UVA), thereby acting as a DNA damage sensor. Recognizes the substrate consensus sequence [ST]-Q. Phosphorylates 'Ser-139' of histone variant H2AX at double strand breaks (DSBs), thereby regulating DNA damage response mechanism. Also plays a role in pre-B cell allelic exclusion, a process leading to expression of a single immunoglobulin heavy chain allele to enforce clonality and monospecific recognition by the B-cell antigen receptor (BCR) expressed on individual B-lymphocytes. After the introduction of DNA breaks by the RAG complex on one immunoglobulin allele, acts by mediating a repositioning of the second allele to pericentromeric heterochromatin, preventing accessibility to the RAG complex and recombination of the second allele. Also involved in signal transduction and cell cycle control. May function as a tumor suppressor. Necessary for activation of ABL1 and SAPK. Phosphorylates DYRK2, CHEK2, p53/TP53, FBXW7, FANCD2, NFKBIA, BRCA1, CREBBP/CBP, RBBP8/CTIP, FBXO46, MRE11, nibrin (NBN), RAD50, RAD17, PELI1, TERF1, UFL1, RAD9, UBQLN4 and DCLRE1C. May play a role in vesicle and/or protein transport. Could play a role in T-cell development, gonad and neurological function. Binds DNA ends. Plays a role in replication-dependent histone mRNA degradation. Phosphorylation of DYRK2 in nucleus in response to genotoxic stress prevents its MDM2-mediated ubiquitination and subsequent proteasome degradation. Phosphorylates ATF2 which stimulates its function in DNA damage response. Phosphorylates ERCC6 which is essential for its chromatin remodeling activity at DNA double-strand breaks. Phosphorylates TTC5/STRAP at 'Ser-203' in the cytoplasm in response to DNA damage, which promotes TTC5/STRAP nuclear localization. Also involved in pexophagy by mediating phosphorylation of PEX5: translocated to peroxisomes in response to reactive oxygen species (ROS), and catalyzes phosphorylation of PEX5, promoting PEX5 ubiquitination and induction of pexophagy. In Mus musculus (Mouse), this protein is Serine-protein kinase ATM (Atm).